Consider the following 539-residue polypeptide: Phosphoenolpyruvate carboxykinase (ATP) (539 aa).

3 residues coordinate substrate: Arg64, Tyr206, and Lys212. Residues Lys212, His231, and 247–255 (GLSGTGKTT) each bind ATP. Mn(2+) contacts are provided by Lys212 and His231. Asp268 lines the Mn(2+) pocket. Residues Glu296, Arg332, 448–449 (RI), and Thr454 contribute to the ATP site. A substrate-binding site is contributed by Arg332.

It belongs to the phosphoenolpyruvate carboxykinase (ATP) family. In terms of assembly, monomer. Mn(2+) serves as cofactor.

Its subcellular location is the cytoplasm. The enzyme catalyses oxaloacetate + ATP = phosphoenolpyruvate + ADP + CO2. It participates in carbohydrate biosynthesis; gluconeogenesis. Functionally, involved in the gluconeogenesis. Catalyzes the conversion of oxaloacetate (OAA) to phosphoenolpyruvate (PEP) through direct phosphoryl transfer between the nucleoside triphosphate and OAA. In Salmonella agona (strain SL483), this protein is Phosphoenolpyruvate carboxykinase (ATP).